The sequence spans 129 residues: Small ribosomal subunit protein uS11 (129 aa).

The protein belongs to the universal ribosomal protein uS11 family. In terms of assembly, part of the 30S ribosomal subunit. Interacts with proteins S7 and S18. Binds to IF-3.

In terms of biological role, located on the platform of the 30S subunit, it bridges several disparate RNA helices of the 16S rRNA. Forms part of the Shine-Dalgarno cleft in the 70S ribosome. The polypeptide is Small ribosomal subunit protein uS11 (Nitrosomonas eutropha (strain DSM 101675 / C91 / Nm57)).